Reading from the N-terminus, the 100-residue chain is Large ribosomal subunit protein eL30 (100 aa).

It belongs to the eukaryotic ribosomal protein eL30 family.

The protein is Large ribosomal subunit protein eL30 of Methanococcus maripaludis (strain DSM 14266 / JCM 13030 / NBRC 101832 / S2 / LL).